Reading from the N-terminus, the 95-residue chain is Small ribosomal subunit protein uS19 (95 aa).

Residues 73–95 are disordered; the sequence is EFSPTRTYRGHGADKNAKGSKKK.

The protein belongs to the universal ribosomal protein uS19 family.

In terms of biological role, protein S19 forms a complex with S13 that binds strongly to the 16S ribosomal RNA. This chain is Small ribosomal subunit protein uS19, found in Deinococcus geothermalis (strain DSM 11300 / CIP 105573 / AG-3a).